We begin with the raw amino-acid sequence, 324 residues long: Ig gamma-1 chain C region secreted form (324 aa).

The CH1 stretch occupies residues 1–97 (AKTTPPSVYP…ASSTKVDKKI (97 aa)). C27 and C82 are joined by a disulfide. The hinge stretch occupies residues 98 to 110 (VPRDCGCKPCICT). A CH2 region spans residues 111–217 (VPEVSSVFIF…PIEKTISKTK (107 aa)). 2 disulfides stabilise this stretch: C138-C198 and C244-C302. The N-linked (GlcNAc...) asparagine glycan is linked to N174. Residues 218-324 (GRPKAPQVYT…EKSLSHSPGK (107 aa)) form a CH3 region.

The protein localises to the secreted. This Mus musculus (Mouse) protein is Ig gamma-1 chain C region secreted form (Ighg1).